A 517-amino-acid polypeptide reads, in one-letter code: Endoglycoceramidase (517 aa).

The N-terminal stretch at 1 to 17 (MISVALIILFLAKVISG) is a signal peptide. The N-linked (GlcNAc...) asparagine glycan is linked to Asn99. Residue Glu230 is the Proton donor of the active site. Asn298, Asn380, and Asn393 each carry an N-linked (GlcNAc...) asparagine glycan.

Belongs to the glycosyl hydrolase 5 (cellulase A) family. In terms of tissue distribution, expressed uniformly in digestive cells, tentacles and peduncle regions suggesting expression in the endoderm throughout the whole body (at protein level).

It is found in the secreted. It carries out the reaction an oligoglycosyl-(1-&gt;4)-beta-D-glucosyl-(1&lt;-&gt;1)-ceramide + H2O = an oligoglycosyl-(1-&gt;4)-D-glucose + an N-acyl-sphingoid base. Cu(2+), zinc, manganese, calcium, magnesium and EDTA have no significant effects on enzyme activity. Enzyme requires presence of detergents such as Triton X-100 and Lubrol PX for the hydrolysis of glycosphingolipids. Taurodeoxycholate strongly inhibits the enzyme activity. In terms of biological role, hydrolysis of the glycosidic linkage between oligosaccharides and ceramides of glycosphingolipids, optimal substrates appear to be the glycosphingolipids with a gangliotetraose structure. The sequence is that of Endoglycoceramidase from Hydra vulgaris (Hydra).